Here is a 270-residue protein sequence, read N- to C-terminus: MDNPIRVAVMGCNGRMGKVLLEAITNADGVVVGAALERPGSAVIGLDAGELNGLGKLGVMISDSLDKVRDEFDLIIDFTRPEVTLANLAFALAHQKQMVIGTTGFDDAGKAALKEAGKQIGIVFASNYSVGVNLVFKLLEQAAKVMGDYTDIEIIEGHHRHKVDAPSGTALSMGEVVAKTLGRDLKECAVYGREGITGERDRNTIGFATIRAGDMVGEHTVMFADIGERVEISHKASSRLTFANGAVRAGKWLGQQGAGLYDMQDVLSLK.

NAD(+) contacts are provided by residues 11 to 16 (GCNGRM) and Glu37. NADP(+) is bound at residue Arg38. Residues 101 to 103 (GTT) and 125 to 128 (ASNY) each bind NAD(+). Catalysis depends on His158, which acts as the Proton donor/acceptor. His159 lines the (S)-2,3,4,5-tetrahydrodipicolinate pocket. Lys162 acts as the Proton donor in catalysis. (S)-2,3,4,5-tetrahydrodipicolinate is bound at residue 168 to 169 (GT).

The protein belongs to the DapB family.

The protein resides in the cytoplasm. It carries out the reaction (S)-2,3,4,5-tetrahydrodipicolinate + NAD(+) + H2O = (2S,4S)-4-hydroxy-2,3,4,5-tetrahydrodipicolinate + NADH + H(+). The catalysed reaction is (S)-2,3,4,5-tetrahydrodipicolinate + NADP(+) + H2O = (2S,4S)-4-hydroxy-2,3,4,5-tetrahydrodipicolinate + NADPH + H(+). It participates in amino-acid biosynthesis; L-lysine biosynthesis via DAP pathway; (S)-tetrahydrodipicolinate from L-aspartate: step 4/4. Functionally, catalyzes the conversion of 4-hydroxy-tetrahydrodipicolinate (HTPA) to tetrahydrodipicolinate. In Aeromonas salmonicida (strain A449), this protein is 4-hydroxy-tetrahydrodipicolinate reductase.